The following is a 344-amino-acid chain: L-rhamnose-proton symporter (344 aa).

10 consecutive transmembrane segments (helical) span residues alanine 4–alanine 24, tryptophan 38–leucine 58, phenylalanine 68–isoleucine 88, methionine 101–isoleucine 121, threonine 137–leucine 157, leucine 175–alanine 195, leucine 214–isoleucine 234, valine 259–glycine 279, isoleucine 290–leucine 310, and valine 323–alanine 343.

The protein belongs to the L-rhamnose transporter (TC 2.A.7.6) family.

Its subcellular location is the cell inner membrane. The catalysed reaction is L-rhamnopyranose(in) + H(+)(in) = L-rhamnopyranose(out) + H(+)(out). Functionally, uptake of L-rhamnose across the cytoplasmic membrane with the concomitant transport of protons into the cell (symport system). In Escherichia coli O9:H4 (strain HS), this protein is L-rhamnose-proton symporter.